Here is a 255-residue protein sequence, read N- to C-terminus: Hydroxylmethylpyrimidine kinase (255 aa).

Residues G18, Q43, and N110 each coordinate pyridoxal 5'-phosphate. Residue Q43 participates in 4-amino-5-hydroxymethyl-2-methylpyrimidine binding. Residues C195 and C207 are joined by a disulfide bond. Position 208 (S208) interacts with pyridoxal 5'-phosphate.

It belongs to the ThiD family. In terms of assembly, homodimer. Crystals show a disulfide bond between Cys-195 and Cys-207. This disulfide is possibly an artifact of the purification and crystallization conditions. However, as it is adjacent to the conserved GSGC of the oxyanion hole, this disulfide may help to orient the backbone amides toward the oxanion intermediate.

It carries out the reaction 4-amino-5-hydroxymethyl-2-methylpyrimidine + ATP = 4-amino-2-methyl-5-(phosphooxymethyl)pyrimidine + ADP + H(+). Its pathway is cofactor biosynthesis; thiamine diphosphate biosynthesis. Its activity is regulated as follows. Inhibited by pyridoxal phosphate at high micromolar concentrations. Its function is as follows. Catalyzes the phosphorylation of hydroxymethylpyrimidine (HMP) to hydroxymethylpyrimidine phosphate (HMP-P). Unlike other HMPKs, it cannot catalyze the phosphorylation of HMP-P to generate the diphosphate HMP-PP. Shows no activity with pyridoxal, pyridoxamine or pyridoxine. Does not show phosphatase activity. The protein is Hydroxylmethylpyrimidine kinase of Acinetobacter baumannii (strain IS-123).